Reading from the N-terminus, the 106-residue chain is Large ribosomal subunit protein uL24 (106 aa).

The protein belongs to the universal ribosomal protein uL24 family. In terms of assembly, part of the 50S ribosomal subunit.

Its function is as follows. One of two assembly initiator proteins, it binds directly to the 5'-end of the 23S rRNA, where it nucleates assembly of the 50S subunit. One of the proteins that surrounds the polypeptide exit tunnel on the outside of the subunit. This is Large ribosomal subunit protein uL24 from Thermosipho africanus (strain TCF52B).